A 581-amino-acid chain; its full sequence is MAAGGRGLIRALHSSPCPTWKRAQSGANGRLKPEYDAVVIGAGHNGLVAAAYLQRLGVNTAVFERRHVIGGAAVTEEIIPGFKFSRASYLLSLLRPQICTDLELKKHGLKLHLRDPYSFTPMLEEGTLNRLPRSLLLGTDMAANQKEISQFSRKDAQAFPRYEEFMKRLVLAIDPLLDAAPVDTTAFQHGSLLQRLRALSTLKPLLKAGRTLGAQLPQYYEVLTAPISKVLDQRFESEPLKATLATDAVIGAMTSPHTPGSGYVLLHHVMGSLEGTQGAWSYVQGGMGALSDAIASSAATRGASIFTEKTVAKVQVNSEGRAQGVTLQDGEEVRSRVVLSCASPQVTFLELTPQEWLPGAFVKRISQLDTQSPVTKINVAVDRLPNFQAAPNAPGDQPQGHHQCSIHLNCEDTLLLHQAFEDAKGGLPSQKPMIELCIPSSLDPTLAPPGCHVVSLFTQYTPYTLAGGKVWNEQEKNTYADKVFDCIEAYAPGFKRSVLARDILTPPDLERIFRLPGGNIFHGAMSLDQLYFARPVPQHSDYRCPVQGLYLCGSGAHPGGGVMGAAGRNAAHVVFRDLKNM.

FAD is bound at residue 38–71 (VVIGAGHNGLVAAAYLQRLGVNTAVFERRHVIGG).

Belongs to the carotenoid/retinoid oxidoreductase family. In terms of assembly, interacts with COX5B; this interaction may contribute to localize PYROXD2 to the inner face of the inner mitochondrial membrane.

It is found in the mitochondrion matrix. Functionally, probable oxidoreductase that may play a role as regulator of mitochondrial function. The protein is Pyridine nucleotide-disulfide oxidoreductase domain-containing protein 2 of Mus musculus (Mouse).